Here is a 226-residue protein sequence, read N- to C-terminus: Triosephosphate isomerase (226 aa).

Residue 10–12 coordinates substrate; it reads NFK. Residue histidine 96 is the Electrophile of the active site. Glutamate 144 serves as the catalytic Proton acceptor. Residues isoleucine 149, glycine 184, and 205 to 206 contribute to the substrate site; that span reads AS.

The protein belongs to the triosephosphate isomerase family. In terms of assembly, homotetramer; dimer of dimers.

Its subcellular location is the cytoplasm. It catalyses the reaction D-glyceraldehyde 3-phosphate = dihydroxyacetone phosphate. Its pathway is carbohydrate biosynthesis; gluconeogenesis. It participates in carbohydrate degradation; glycolysis; D-glyceraldehyde 3-phosphate from glycerone phosphate: step 1/1. Functionally, involved in the gluconeogenesis. Catalyzes stereospecifically the conversion of dihydroxyacetone phosphate (DHAP) to D-glyceraldehyde-3-phosphate (G3P). In Methanopyrus kandleri (strain AV19 / DSM 6324 / JCM 9639 / NBRC 100938), this protein is Triosephosphate isomerase.